Here is a 293-residue protein sequence, read N- to C-terminus: Methylsterol monooxygenase 1 (293 aa).

Transmembrane regions (helical) follow at residues 55–75 (LIVH…FQFI) and 100–120 (KILF…YYFT). Residues 144–274 (GCAVIEDTWH…FTWWDKLFGT (131 aa)) form the Fatty acid hydroxylase domain. Positions 157 to 161 (HRLLH) match the Histidine box-1 motif. Positions 170-174 (HKVHH) match the Histidine box-2 motif. Residues 199–219 (FFIGIVLLCDHVILLWAWVTI) traverse the membrane as a helical segment. Residues 249-255 (HHDFHHM) carry the Histidine box-3 motif.

It belongs to the sterol desaturase family. It depends on Fe cation as a cofactor. Post-translationally, ubiquitinated by MARCHF6, leading to proteasomal degradation.

It is found in the endoplasmic reticulum membrane. It catalyses the reaction 4,4-dimethyl-5alpha-cholest-7-en-3beta-ol + 6 Fe(II)-[cytochrome b5] + 3 O2 + 5 H(+) = 4alpha-carboxy-4beta-methyl-5alpha-cholest-7-ene-3beta-ol + 6 Fe(III)-[cytochrome b5] + 4 H2O. It carries out the reaction 4,4-dimethyl-5alpha-cholesta-8,24-dien-3beta-ol + 6 Fe(II)-[cytochrome b5] + 3 O2 + 5 H(+) = 4beta-methylzymosterol-4alpha-carboxylate + 6 Fe(III)-[cytochrome b5] + 4 H2O. The enzyme catalyses 4alpha-methylzymosterol + 6 Fe(II)-[cytochrome b5] + 3 O2 + 5 H(+) = 4alpha-carboxyzymosterol + 6 Fe(III)-[cytochrome b5] + 4 H2O. The catalysed reaction is 4alpha-methyl-5alpha-cholest-7-en-3beta-ol + 6 Fe(II)-[cytochrome b5] + 3 O2 + 5 H(+) = 4alpha-carboxy-5alpha-cholest-7-en-3beta-ol + 6 Fe(III)-[cytochrome b5] + 4 H2O. It catalyses the reaction 4,4-dimethyl-5alpha-cholest-8-en-3beta-ol + 6 Fe(II)-[cytochrome b5] + 3 O2 + 5 H(+) = 4alpha-carboxy-4beta-methyl-5alpha-cholest-8-en-3beta-ol + 6 Fe(III)-[cytochrome b5] + 4 H2O. It carries out the reaction 4alpha-methyl-5alpha-cholest-8-en-3beta-ol + 6 Fe(II)-[cytochrome b5] + 3 O2 + 5 H(+) = 4alpha-carboxy-5alpha-cholest-8-ene-3beta-ol + 6 Fe(III)-[cytochrome b5] + 4 H2O. The protein operates within steroid biosynthesis; zymosterol biosynthesis; zymosterol from lanosterol: step 3/6. It functions in the pathway steroid biosynthesis; cholesterol biosynthesis. In terms of biological role, catalyzes the three-step monooxygenation required for the demethylation of 4,4-dimethyl and 4alpha-methylsterols, which can be subsequently metabolized to cholesterol. This is Methylsterol monooxygenase 1 (Msmo1) from Mus musculus (Mouse).